Reading from the N-terminus, the 357-residue chain is MADAAVIEKLEAGFKKLEAATDCKSLLKKYLTKEVFDKLKDKKTSLGATLLDVIQSGVENLDSGVGIYAPDAEAYTLFAPLFDPIIEDYHVGFKQTDKHPNKDFGDVNSFVNVDPEGKFVISTRVRCGRSMQGYPFNPCLTESQYKEMEAKVSSTLSSLEGELKGTYYPLTGMSKEVQQKLIDDHFLFKEGDRFLQAANACRYWPAGRGIYHNDNKTFLVWVNEEDHLRIISMQMGGDLGQVFRRLTSAVNEIEKRIPFSHHDRLGFLTFCPTNLGTTVRASVHIKLPKLAANREKLEEVAGKYNLQVRGTRGEHTEAEGGIYDISNKRRMGLTEFQAVKEMQDGILELIKIEKEMI.

In terms of domain architecture, Phosphagen kinase N-terminal spans 9 to 91; it reads KLEAGFKKLE…FDPIIEDYHV (83 aa). 64 to 68 is an L-arginine binding site; it reads GVGIY. The Phosphagen kinase C-terminal domain occupies 119 to 356; the sequence is FVISTRVRCG…LELIKIEKEM (238 aa). ATP-binding positions include 122–126 and His185; that span reads STRVR. Glu225 serves as a coordination point for L-arginine. Residue Arg229 coordinates ATP. Cys271 contributes to the L-arginine binding site. ATP contacts are provided by residues 280-284 and 309-314; these read RASVH and RGTRGE. Residue Glu314 participates in L-arginine binding.

This sequence belongs to the ATP:guanido phosphotransferase family.

It catalyses the reaction L-arginine + ATP = N(omega)-phospho-L-arginine + ADP + H(+). Its function is as follows. Catalyzes the reversible transfer of high energy ATP gamma-phosphate group to L-arginine. The sequence is that of Arginine kinase Met e 2 from Metapenaeus ensis (Greasyback shrimp).